A 275-amino-acid polypeptide reads, in one-letter code: Large ribosomal subunit protein uL2 (275 aa).

A compositionally biased stretch (polar residues) spans 38–53 (SSKAGRNNNGRITTRH). 2 disordered regions span residues 38 to 59 (SSKAGRNNNGRITTRHQGGGHK) and 224 to 257 (AMNPIDHPHGGGEGRTAAGRDPVSPWGTPTKGFR).

Belongs to the universal ribosomal protein uL2 family. Part of the 50S ribosomal subunit. Forms a bridge to the 30S subunit in the 70S ribosome.

In terms of biological role, one of the primary rRNA binding proteins. Required for association of the 30S and 50S subunits to form the 70S ribosome, for tRNA binding and peptide bond formation. It has been suggested to have peptidyltransferase activity; this is somewhat controversial. Makes several contacts with the 16S rRNA in the 70S ribosome. In Burkholderia multivorans (strain ATCC 17616 / 249), this protein is Large ribosomal subunit protein uL2.